Here is a 545-residue protein sequence, read N- to C-terminus: MVVSLSFPEADPALSSPGAQQLHQDEAQVVVELTANDKPSLSWECPQGPGCGLQNTGNSCYLNAALQCLTHTPPLADYMLSQEYSQTCCSPEGCKMCAMEAHVTQSLLHSHSGDVMKPSQILTSAFHKHQQEDAHEFLMFTLETMHESCLQVHRQSEPTSEDSSPIHDIFGGLWRSQIKCLHCQGTSDTYDRFLDVPLDISSAQSVNQALWDTEKSEELRGENAYYCGRCRQKMPASKTLHIHSAPKVLLLVLKRFSAFMGNKLDRKVSYPEFLDLKPYLSQPTGGPLPYALYAVLVHEGATCHSGHYFSYVKAGHGKWYKMDDTKVTSCDVTSVLNENAYVLFYVQQTDLKEVSIDMPEGRIHEVLDPEYQLKKSRRKKHKKKSPCTEDVGEPSKNREKKATKETSLGEGKVLQEKNHKKAGQKHENTKLVPQEQNHQKLGQKHRNNEILPQEQNHQKTGQSLRNTEGELDLPADAIVIHLPRSIANWGRDTPDKVNQPWHNADRLLTSQDLVNTGQLCRQEGRRRSKKGKNKNKQGQKLLLVR.

The USP domain occupies 51 to 348 (CGLQNTGNSC…NAYVLFYVQQ (298 aa)). Residue cysteine 60 is the Nucleophile of the active site. Residue histidine 307 is the Proton acceptor of the active site. Disordered stretches follow at residues 367–443 (LDPE…KLGQ) and 521–545 (RQEGRRRSKKGKNKNKQGQKLLLVR). The span at 374 to 385 (KKSRRKKHKKKS) shows a compositional bias: basic residues. Positions 393–404 (EPSKNREKKATK) are enriched in basic and acidic residues. Over residues 524-537 (GRRRSKKGKNKNKQ) the composition is skewed to basic residues.

This sequence belongs to the peptidase C19 family. USP17 subfamily. As to expression, detected in T-cell, myeloid, and embryonic stem cell lines.

The protein resides in the nucleus. It is found in the endoplasmic reticulum. The enzyme catalyses Thiol-dependent hydrolysis of ester, thioester, amide, peptide and isopeptide bonds formed by the C-terminal Gly of ubiquitin (a 76-residue protein attached to proteins as an intracellular targeting signal).. Functionally, deubiquitinating enzyme that removes conjugated ubiquitin from specific proteins to regulate different cellular processes that may include cell proliferation, progression through the cell cycle, apoptosis, cell migration, and the cellular response to viral infection. The sequence is that of Ubiquitin carboxyl-terminal hydrolase 17-like protein D from Mus musculus (Mouse).